The primary structure comprises 135 residues: ATP synthase epsilon chain (135 aa).

This sequence belongs to the ATPase epsilon chain family. In terms of assembly, F-type ATPases have 2 components, CF(1) - the catalytic core - and CF(0) - the membrane proton channel. CF(1) has five subunits: alpha(3), beta(3), gamma(1), delta(1), epsilon(1). CF(0) has three main subunits: a, b and c.

The protein resides in the cell inner membrane. Its function is as follows. Produces ATP from ADP in the presence of a proton gradient across the membrane. The polypeptide is ATP synthase epsilon chain (Bradyrhizobium sp. (strain BTAi1 / ATCC BAA-1182)).